The sequence spans 310 residues: Olfactory receptor 2A25 (310 aa).

Topologically, residues 1–24 are extracellular; it reads MGGNQTSITEFLLLGFPIGPRIQM. Asn-4 is a glycosylation site (N-linked (GlcNAc...) asparagine). The chain crosses the membrane as a helical span at residues 25–48; sequence LLFGLFSLFYIFILLGNGTILGLI. Residues 49-56 are Cytoplasmic-facing; it reads SLDSRLHT. Residues 57–78 form a helical membrane-spanning segment; the sequence is PMYFFLSHLAVVDIACACSTVP. Topologically, residues 79–99 are extracellular; the sequence is QMLVNLLHPAKPISFAGCMTQ. The cysteines at positions 96 and 188 are disulfide-linked. A helical membrane pass occupies residues 100-119; it reads MFLFLSFAHTECLLLVVMSY. The Cytoplasmic portion of the chain corresponds to 120–138; sequence DRYVAICHPLRYSTIMTWK. Residues 139-157 traverse the membrane as a helical segment; it reads VCITLALTSWILGVLLALV. Residues 158-195 are Extracellular-facing; it reads HLVLLLPLSFCGPQKLNHFFCEIMAVLKLACADTHINE. A helical membrane pass occupies residues 196 to 218; the sequence is VMVLAGAVSVLVGAFFSTVISYV. Over 219–235 the chain is Cytoplasmic; that stretch reads HILCAILKIQSGEGCQK. A helical transmembrane segment spans residues 236–258; sequence AFSICSSHLCVVGLFYGTAIIMY. Residues 259-271 lie on the Extracellular side of the membrane; sequence VEPQYESPKEQKK. A helical transmembrane segment spans residues 272–291; the sequence is YLLLFHSLFNPMLNPLIYSL. The Cytoplasmic portion of the chain corresponds to 292–310; the sequence is RNKEVQGTLKRMLEKKRTS.

Belongs to the G-protein coupled receptor 1 family.

Its subcellular location is the cell membrane. Functionally, odorant receptor. The chain is Olfactory receptor 2A25 (OR2A25) from Homo sapiens (Human).